The chain runs to 313 residues: Dimethyladenosine transferase (313 aa).

The disordered stretch occupies residues 1–21 (MPKVKSGAIGRRRGRQEQRRE). S-adenosyl-L-methionine-binding residues include His-37, Leu-39, Gly-64, Glu-85, Asp-113, and Asn-128.

This sequence belongs to the class I-like SAM-binding methyltransferase superfamily. rRNA adenine N(6)-methyltransferase family. Part of the small subunit (SSU) processome, composed of more than 70 proteins and the RNA chaperone small nucleolar RNA (snoRNA) U3.

The protein localises to the nucleus. Its subcellular location is the nucleoplasm. It is found in the nucleolus. The enzyme catalyses adenosine(1779)/adenosine(1780) in 18S rRNA + 4 S-adenosyl-L-methionine = N(6)-dimethyladenosine(1779)/N(6)-dimethyladenosine(1780) in 18S rRNA + 4 S-adenosyl-L-homocysteine + 4 H(+). Specifically dimethylates two adjacent adenosines in the loop of a conserved hairpin near the 3'-end of 18S rRNA in the 40S particle. Involved in the pre-rRNA processing steps leading to small-subunit rRNA production independently of its RNA-modifying catalytic activity. Part of the small subunit (SSU) processome, first precursor of the small eukaryotic ribosomal subunit. During the assembly of the SSU processome in the nucleolus, many ribosome biogenesis factors, an RNA chaperone and ribosomal proteins associate with the nascent pre-rRNA and work in concert to generate RNA folding, modifications, rearrangements and cleavage as well as targeted degradation of pre-ribosomal RNA by the RNA exosome. The polypeptide is Dimethyladenosine transferase (Homo sapiens (Human)).